Reading from the N-terminus, the 421-residue chain is NADP(+)-dependent glutamate dehydrogenase (421 aa).

Substrate contacts are provided by Lys-70 and Lys-94. Residue Lys-106 is the Proton donor of the active site. Thr-190 and Asn-221 together coordinate NADP(+). Ser-354 contributes to the substrate binding site.

Belongs to the Glu/Leu/Phe/Val dehydrogenases family. Homohexamer.

The enzyme catalyses L-glutamate + NADP(+) + H2O = 2-oxoglutarate + NH4(+) + NADPH + H(+). With respect to regulation, is not regulated allosterically. Activity is inhibited in the presence of high ionic strength; the inhibitory effect of KCl is slightly higher than that of NaCl. Its function is as follows. Catalyzes the reversible oxidative deamination of L-glutamate to 2-oxoglutarate and ammonia, thereby playing a key role at the intersection of the carbon and nitrogen metabolic pathways. Shows a high preference for NADP(+)/NADPH as the acceptor/donor over NAD(+)/NADH. May function in vivo in the synthetic direction. Also catalyzes at very low rates the oxidative deamination of L-2-aminobutyrate, and the reductive amination of 2-oxovalerate and 2-oxobutyrate. In Pyrobaculum calidifontis (strain DSM 21063 / JCM 11548 / VA1), this protein is NADP(+)-dependent glutamate dehydrogenase.